A 126-amino-acid chain; its full sequence is Aspartate 1-decarboxylase (126 aa).

The active-site Schiff-base intermediate with substrate; via pyruvic acid is Ser-25. At Ser-25 the chain carries Pyruvic acid (Ser). Substrate is bound at residue Thr-57. The Proton donor role is filled by Tyr-58. 73–75 (GGA) provides a ligand contact to substrate.

This sequence belongs to the PanD family. In terms of assembly, heterooctamer of four alpha and four beta subunits. Pyruvate serves as cofactor. Post-translationally, is synthesized initially as an inactive proenzyme, which is activated by self-cleavage at a specific serine bond to produce a beta-subunit with a hydroxyl group at its C-terminus and an alpha-subunit with a pyruvoyl group at its N-terminus.

It localises to the cytoplasm. The enzyme catalyses L-aspartate + H(+) = beta-alanine + CO2. It participates in cofactor biosynthesis; (R)-pantothenate biosynthesis; beta-alanine from L-aspartate: step 1/1. Functionally, catalyzes the pyruvoyl-dependent decarboxylation of aspartate to produce beta-alanine. This chain is Aspartate 1-decarboxylase, found in Xylella fastidiosa (strain 9a5c).